We begin with the raw amino-acid sequence, 647 residues long: EEGWVPGPSLISLQMRVTPKLMRLAWDGFPLHYSEKHGWGYLVPGRQDNLPAASAEPEGPVCPHRAIERLYRQHCLQRGQEQPPEEAGVEDELMVLEGSSMWQKVEELSQLELDMERPGRAEQSQMQDEDGLPELVEESSQPSFHHGNGPYNDVNIPGCWFFKLPHKDGNENNVGSPFAKDFLPRMEDGTLRAAVGRTHGTRALEINKMVSFWRNAHKRVSSQVVVWLKKGELPRAVTRHPAYSEEEDYGAILPQVVTAGTITRRAVEPTWLTASNARADRVGSELKAMVQVPPGYSLVGADVDSQELWIAAVLGEAHFAGMHGCTAFGWMTLQGKKSDGTDLHSKTAATVGISREHAKVFNYGRIYGAGQPFAERLLMQFNHRLTQQQAREKAQQMYAVTKGIRRFHLSEEGEWLVKELELAVDKAEDGTVSAQDVQKIQREAMRKSRRKKKWDVVAHRMWAGGTESEMFNKLESIALSASPQTPVLGCHISRALEPAVAKGEFLTSRVNWVVQSSAVDYLHLMLVSMKWLFEEYDINGRFCISIHDEVRYLVQEQDRYRAALALQITNLLTRCMFAYKLGLQDLPQSVAFFSAVDIDRCLRKEVTMNCATPSNPTGMEKKYGIPRGEALDIYQIIEITKGSLEKK.

A disordered region spans residues 116-147; the sequence is ERPGRAEQSQMQDEDGLPELVEESSQPSFHHG. Positions 127 to 137 are enriched in acidic residues; sequence QDEDGLPELVE.

Belongs to the DNA polymerase type-A family. Heterotrimer composed of a catalytic subunit and a homodimer of accessory subunits. Interacts with TTC3. It depends on Mg(2+) as a cofactor.

The protein localises to the mitochondrion. The protein resides in the mitochondrion matrix. It localises to the mitochondrion nucleoid. It catalyses the reaction DNA(n) + a 2'-deoxyribonucleoside 5'-triphosphate = DNA(n+1) + diphosphate. Involved in the replication of mitochondrial DNA. Associates with mitochondrial DNA. The polypeptide is DNA polymerase subunit gamma-1 (POLG) (Gallus gallus (Chicken)).